A 761-amino-acid polypeptide reads, in one-letter code: Mitochondrial inner membrane m-AAA protease component YTA10 (761 aa).

Topologically, residues 1-115 are mitochondrial matrix; the sequence is MMMWQRYARG…SLSEYFRSKE (115 aa). The disordered stretch occupies residues 67–101; it reads SWTRLNENRPNKEGEGKNNGNKDNNSNKEDGKDKR. 2 stretches are compositionally biased toward basic and acidic residues: residues 72–82 and 91–101; these read NENRPNKEGEG and NSNKEDGKDKR. A helical transmembrane segment spans residues 116–136; that stretch reads FANTMFLTIGFTIIFTLLTPS. At 137-223 the chain is on the mitochondrial intermembrane side; it reads SNNSGDDSNR…IPIKYIERSS (87 aa). The helical transmembrane segment at 224-244 threads the bilayer; the sequence is PFTFLFPFLPTIILLGGLYFI. The Mitochondrial matrix portion of the chain corresponds to 245–761; that stretch reads TRKINSSPPN…EPPEAPAATN (517 aa). Positions 290, 291, 332, 333, 334, 335, 336, and 472 each coordinate ATP. Residue His-558 coordinates Zn(2+). Glu-559 is an active-site residue. The Zn(2+) site is built by His-562 and Asp-634.

This sequence in the N-terminal section; belongs to the AAA ATPase family. The protein in the C-terminal section; belongs to the peptidase M41 family. Component of the 850 kDa m-AAA protease complex, a heterohexamer composed of YTA12/RCA1 and YTA10/AFG3. Associates with the prohibitin complex, composed of PHB1 and PHB2, inhibiting the activity of the m-AAA protease complex. Zn(2+) is required as a cofactor.

It localises to the mitochondrion inner membrane. The enzyme catalyses ATP + H2O = ADP + phosphate + H(+). With respect to regulation, ATP hydrolysis is coordinated within m-AAA protease ring complexes: ATP-binding to YTA10/AFG3 inhibits ATP hydrolysis by the neighboring subunit YTA12/RCA1, leading to coordinated ATP hydrolysis within the AAA ATPase ring. Its function is as follows. Catalytic component of the m-AAA protease, a protease that plays a key role in proteostasis of inner mitochondrial membrane proteins. YTA10/AFG3 possesses both ATPase and protease activities: the ATPase activity is required to unfold substrates, threading them into the internal proteolytic cavity for hydrolysis into small peptide fragments. The complex is necessary for the assembly of mitochondrial respiratory chain and ATPase complexes. The m-AAA protease carries out protein quality control in the inner membrane of the mitochondria by mediating degradation of mistranslated or misfolded polypeptides. It also mediates protein maturation of the mitochondrial ribosomal subunit MRPL32/bL32m by catalyzing the cleavage of the presequence of MRPL32/bL32m prior to assembly into the mitochondrial ribosome. Promotes maturation of cytochrome c peroxidase (CCP1) by acting as a membrane protein dislocase via its ATPase activity: pulls the CCP1 transmembrane to the matrix prior to processing by the rhomboid protease PCP1. The membrane protein dislocase activity is also required to dislocate moderately hydrophobic transmembrane segments from the membrane. This chain is Mitochondrial inner membrane m-AAA protease component YTA10, found in Saccharomyces cerevisiae (strain ATCC 204508 / S288c) (Baker's yeast).